The following is a 151-amino-acid chain: Transcriptional regulator MraZ (151 aa).

SpoVT-AbrB domains follow at residues 5–52 (ANAV…PLDE) and 81–124 (AVDL…DEDA).

It belongs to the MraZ family. Forms oligomers.

The protein localises to the cytoplasm. It is found in the nucleoid. The chain is Transcriptional regulator MraZ from Pseudomonas putida (strain ATCC 700007 / DSM 6899 / JCM 31910 / BCRC 17059 / LMG 24140 / F1).